A 429-amino-acid polypeptide reads, in one-letter code: Serine hydroxymethyltransferase (429 aa).

(6S)-5,6,7,8-tetrahydrofolate is bound by residues Leu-125 and 129–131; that span reads GHL. At Lys-234 the chain carries N6-(pyridoxal phosphate)lysine.

It belongs to the SHMT family. As to quaternary structure, homodimer. It depends on pyridoxal 5'-phosphate as a cofactor.

The protein resides in the cytoplasm. It carries out the reaction (6R)-5,10-methylene-5,6,7,8-tetrahydrofolate + glycine + H2O = (6S)-5,6,7,8-tetrahydrofolate + L-serine. It participates in one-carbon metabolism; tetrahydrofolate interconversion. Its pathway is amino-acid biosynthesis; glycine biosynthesis; glycine from L-serine: step 1/1. Catalyzes the reversible interconversion of serine and glycine with tetrahydrofolate (THF) serving as the one-carbon carrier. This reaction serves as the major source of one-carbon groups required for the biosynthesis of purines, thymidylate, methionine, and other important biomolecules. Also exhibits THF-independent aldolase activity toward beta-hydroxyamino acids, producing glycine and aldehydes, via a retro-aldol mechanism. This Allorhizobium ampelinum (strain ATCC BAA-846 / DSM 112012 / S4) (Agrobacterium vitis (strain S4)) protein is Serine hydroxymethyltransferase.